A 200-amino-acid polypeptide reads, in one-letter code: Lipopolysaccharide core heptose(II)-phosphate phosphatase (200 aa).

A signal peptide spans 1-25 (MLAFCRSSLKSKKYFIILLALAAIA).

It belongs to the phosphoglycerate mutase family. Ais subfamily.

The protein localises to the periplasm. It functions in the pathway bacterial outer membrane biogenesis; lipopolysaccharide metabolism. In terms of biological role, catalyzes the dephosphorylation of heptose(II) of the outer membrane lipopolysaccharide core. This is Lipopolysaccharide core heptose(II)-phosphate phosphatase from Escherichia coli O6:K15:H31 (strain 536 / UPEC).